Reading from the N-terminus, the 428-residue chain is Septin homolog spn7 (428 aa).

Residues 15–290 (KGKKLRIMVA…ENYRTEKLSN (276 aa)) enclose the Septin-type G domain. A G1 motif region spans residues 25 to 32 (GSSYTSYQ). GTP is bound by residues 25-32 (GSSYTSYQ), glycine 86, 166-174 (NSNAFTEEE), and glycine 224. The G3 motif stretch occupies residues 83 to 86 (EVNG). A G4 motif region spans residues 165 to 168 (GNSN). Disordered stretches follow at residues 287 to 345 (KLSN…SEEL) and 387 to 414 (KEFP…KKMD). Over residues 290–307 (NDSPSNTSLSLQKQNSIV) the composition is skewed to polar residues. Residues 309–325 (NEDKRSVNGSERTETRS) are compositionally biased toward basic and acidic residues. Polar residues-rich tracts occupy residues 326–339 (SIDQ…VSDS) and 392–405 (RTTS…NNTT).

Belongs to the TRAFAC class TrmE-Era-EngA-EngB-Septin-like GTPase superfamily. Septin GTPase family. In terms of assembly, component of the sporulation-specific septin complex composed of at least spn2, spn5, spn6 and spn7.

Its subcellular location is the cytoplasm. The protein resides in the nucleus. The protein localises to the forespore membrane. Septin-like protein involved in the correct orientation of forespore membrane extension during sporulation. Binds phosphatidylinositol 4-phosphate. This chain is Septin homolog spn7 (spn7), found in Schizosaccharomyces pombe (strain 972 / ATCC 24843) (Fission yeast).